We begin with the raw amino-acid sequence, 78 residues long: Surfactant-associated protein 2 (78 aa).

The first 19 residues, 1–19 (MGSGLPLVLLLTLLGSSHG), serve as a signal peptide directing secretion. The N-linked (GlcNAc...) asparagine glycan is linked to asparagine 37.

N-glycosylated. Predominantly expressed in lung, where it is detected in type II pneumocytes in the alveolus, and in nonciliated epithelium in bronchioli (at protein level). Also detected at lower levels in cervix, esophagus, stomach, testis and kidney.

The protein resides in the secreted. It localises to the cytoplasmic vesicle. The protein localises to the secretory vesicle. Its subcellular location is the golgi apparatus. Its function is as follows. Putative surfactant protein. This is Surfactant-associated protein 2 (SFTA2) from Homo sapiens (Human).